Reading from the N-terminus, the 342-residue chain is N-acetyl-gamma-glutamyl-phosphate reductase (342 aa).

Cys149 is a catalytic residue.

The protein belongs to the NAGSA dehydrogenase family. Type 1 subfamily.

It localises to the cytoplasm. It carries out the reaction N-acetyl-L-glutamate 5-semialdehyde + phosphate + NADP(+) = N-acetyl-L-glutamyl 5-phosphate + NADPH + H(+). The protein operates within amino-acid biosynthesis; L-arginine biosynthesis; N(2)-acetyl-L-ornithine from L-glutamate: step 3/4. Its function is as follows. Catalyzes the NADPH-dependent reduction of N-acetyl-5-glutamyl phosphate to yield N-acetyl-L-glutamate 5-semialdehyde. This Cereibacter sphaeroides (strain ATCC 17025 / ATH 2.4.3) (Rhodobacter sphaeroides) protein is N-acetyl-gamma-glutamyl-phosphate reductase.